We begin with the raw amino-acid sequence, 192 residues long: Mitochondrial import inner membrane translocase subunit TIM18 (192 aa).

Residues 1–42 constitute a mitochondrion transit peptide; it reads MLLFPGLKPVLNASTVIVNPVRAVFPGLVLSTKRSFYSINRL. Topologically, residues 43–88 are mitochondrial matrix; sequence NAENKINDIANTSKEASSSVQMFKPPEFSQFKDSYQKDYERIAKYT. Residues 89-109 form a helical membrane-spanning segment; it reads LIPLTMVPFYASFTGGVINPL. Residues 110-113 are Mitochondrial intermembrane-facing; sequence LDAS. The helical transmembrane segment at 114–134 threads the bilayer; sequence LSSIFLIYLQYGFTSCIIDYI. Topologically, residues 135–144 are mitochondrial matrix; that stretch reads PKEKYPRWHK. A helical membrane pass occupies residues 145 to 165; that stretch reads LALYCLYGGSMLSLYGIYELE. At 166–192 the chain is on the mitochondrial intermembrane side; it reads TKNNGFVDLVKKLWNENDDHLYIFGRN.

It belongs to the CybS family. In terms of assembly, component of the TIM22 complex, whose core is composed of TIM18, TIM22 and TIM54, associated with the peripheral proteins MRS5/TIM12 and the 70 kDa heterohexamer composed of TIM9 and TIM10 (or TIM8 and TIM13).

The protein localises to the mitochondrion inner membrane. In terms of biological role, component of the TIM22 complex, a complex that mediates the import and insertion of multi-pass transmembrane proteins into the mitochondrial inner membrane. The TIM22 complex forms a twin-pore translocase that uses the membrane potential as external driving force. Its role in the complex is unclear but it may be involved in the assembly and stabilization of the TIM22 complex. The protein is Mitochondrial import inner membrane translocase subunit TIM18 (TIM18) of Saccharomyces cerevisiae (strain ATCC 204508 / S288c) (Baker's yeast).